The chain runs to 350 residues: ATP-dependent (S)-NAD(P)H-hydrate dehydratase (350 aa).

A YjeF C-terminal domain is found at 35-342 (LMQSVKRIIP…PEVGRAYEEL (308 aa)). (6S)-NADPHX is bound by residues G139 and 192-198 (NVAEFGR). Residues 230–234 (KGPVD) and 249–258 (GGLKRCGGQG) each bind ATP. A (6S)-NADPHX-binding site is contributed by D259.

Belongs to the NnrD/CARKD family. Mg(2+) serves as cofactor.

Its subcellular location is the cytoplasm. It catalyses the reaction (6S)-NADHX + ATP = ADP + phosphate + NADH + H(+). The enzyme catalyses (6S)-NADPHX + ATP = ADP + phosphate + NADPH + H(+). Functionally, catalyzes the dehydration of the S-form of NAD(P)HX at the expense of ATP, which is converted to ADP. Together with NAD(P)HX epimerase, which catalyzes the epimerization of the S- and R-forms, the enzyme allows the repair of both epimers of NAD(P)HX, a damaged form of NAD(P)H that is a result of enzymatic or heat-dependent hydration. This is ATP-dependent (S)-NAD(P)H-hydrate dehydratase from Mycosarcoma maydis (Corn smut fungus).